An 84-amino-acid polypeptide reads, in one-letter code: U1-hexatoxin-Iw1a (84 aa).

An N-terminal signal peptide occupies residues 1–18 (MLKFVVVICLVIMAITFA). 5 disulfides stabilise this stretch: cysteine 21-cysteine 32, cysteine 26-cysteine 40, cysteine 31-cysteine 66, cysteine 50-cysteine 74, and cysteine 68-cysteine 81.

The protein belongs to the MIT-like AcTx family. Expressed by the venom gland.

Its subcellular location is the secreted. In Illawarra wisharti (Illawarra funnel-web spider), this protein is U1-hexatoxin-Iw1a.